A 213-amino-acid polypeptide reads, in one-letter code: Response regulator GacA (213 aa).

Positions 3–119 (RVLVVDDHDL…EMVQAIRLVF (117 aa)) constitute a Response regulatory domain. Aspartate 54 carries the 4-aspartylphosphate modification. In terms of domain architecture, HTH luxR-type spans 142–207 (SDSPFDALSE…ELTLLAVRHG (66 aa)). Residues 166–185 (VQIISDKLCLSPKTVNTYRY) constitute a DNA-binding region (H-T-H motif).

Phosphorylated by GacS.

Functionally, member of the two-component regulatory system GacA/GacS which controls the expression of secondary metabolites and extracellular products. Acts (probably primarily) by activating expression of CsrA1 and CsrA2 antagonist small RNAs (sRNA) RsmX, RsmY and RsmZ which bind to and prevent translation repression by CsrA1 and CsrA2. Involved in the regulation of secondary metabolism and in the synthesis of the antifungal factors cyanide, 2,4-diacetylphloroglucinol and pyoluteorin. Involved in synthesis of the autoinducing signal (unrelated to N-acylhomoserine lactones, induces the Gac/Csr cascade). Exercises positive post-transcriptional control over the hcnABC and aprA genes; acts upstream of CsrA2 (rsmA). Controls expression of csrA1 (rsmE) and csrA2. This Pseudomonas protegens (strain DSM 19095 / LMG 27888 / CFBP 6595 / CHA0) protein is Response regulator GacA.